Consider the following 207-residue polypeptide: Ribosomal RNA small subunit methyltransferase G (207 aa).

Residues G76, Q81, 127–128 (VE), and R141 contribute to the S-adenosyl-L-methionine site.

This sequence belongs to the methyltransferase superfamily. RNA methyltransferase RsmG family.

The protein resides in the cytoplasm. It carries out the reaction guanosine(527) in 16S rRNA + S-adenosyl-L-methionine = N(7)-methylguanosine(527) in 16S rRNA + S-adenosyl-L-homocysteine. Its function is as follows. Specifically methylates the N7 position of guanine in position 527 of 16S rRNA. This chain is Ribosomal RNA small subunit methyltransferase G, found in Neisseria meningitidis serogroup B (strain ATCC BAA-335 / MC58).